The sequence spans 56 residues: Prokaryotic ubiquitin-like protein UBact (56 aa).

The disordered stretch occupies residues 1–56 (MPDQAQKTRPVGPGPSGGGEGPGSPKVEKPNTEELLKRMRKVDPDQAKRYRQRTGQ). A compositionally biased stretch (basic and acidic residues) spans 26-48 (KVEKPNTEELLKRMRKVDPDQAK). Gln-56 is subject to Deamidated glutamine. An Isoglutamyl lysine isopeptide (Gln-Lys) (interchain with K-? in acceptor proteins) cross-link involves residue Gln-56.

Belongs to the ubiquitin-like protein UBact family. Post-translationally, may be modified by deamidation of its C-terminal glutamine to glutamate by the adjacently encoded deamidase. This could be a prerequisite to the subsequent conjugation, as shown in the other prokaryotic ubiquitin-like protein Pup.

May function as a protein modifier covalently attached to lysine residues of substrate proteins. This may serve to target the modified proteins for degradation by proteasomes. This Pedosphaera parvula (strain Ellin514) protein is Prokaryotic ubiquitin-like protein UBact.